The sequence spans 450 residues: Phosphoglucosamine mutase (450 aa).

Ser-101 functions as the Phosphoserine intermediate in the catalytic mechanism. Ser-101, Asp-240, Asp-242, and Asp-244 together coordinate Mg(2+). A Phosphoserine modification is found at Ser-101.

The protein belongs to the phosphohexose mutase family. Mg(2+) serves as cofactor. Activated by phosphorylation.

It catalyses the reaction alpha-D-glucosamine 1-phosphate = D-glucosamine 6-phosphate. In terms of biological role, catalyzes the conversion of glucosamine-6-phosphate to glucosamine-1-phosphate. The protein is Phosphoglucosamine mutase of Streptococcus thermophilus (strain CNRZ 1066).